Consider the following 1072-residue polypeptide: 5'-3' exoribonuclease 2 (1072 aa).

Positions arginine 118–asparagine 144 form a coiled coil. The segment at arginine 269 to glycine 286 adopts a CCHC-type zinc-finger fold. Residues lysine 414 to glutamine 435 are compositionally biased toward basic and acidic residues. Disordered regions lie at residues lysine 414–phenylalanine 459, glutamine 509–threonine 577, alanine 865–glycine 911, and glycine 943–arginine 1072. A compositionally biased stretch (low complexity) spans alanine 518–alanine 543. A compositionally biased stretch (gly residues) spans glycine 892 to glycine 911. Positions glycine 955 to glycine 967 are enriched in pro residues. Composition is skewed to gly residues over residues alanine 983 to arginine 1000, tyrosine 1025 to glycine 1036, and glycine 1056 to arginine 1072.

It belongs to the 5'-3' exonuclease family. XRN2/RAT1 subfamily. Interacts with rai1; the interaction is direct, stabilizes exr-1 protein structure and may stimulate its exoribonuclease activity. The interaction also stimulates rai1 pyrophosphohydrolase activity, probably by recruiting it to mRNA substrates.

The protein localises to the nucleus. Possesses 5'-&gt;3' exoribonuclease activity. Required for the processing of nuclear mRNA and rRNA precursors. May promote the termination of transcription by RNA polymerase II. Essential for vegetative cell growth and chromosome segregation. In Neurospora crassa (strain ATCC 24698 / 74-OR23-1A / CBS 708.71 / DSM 1257 / FGSC 987), this protein is 5'-3' exoribonuclease 2 (exr-1).